Consider the following 348-residue polypeptide: Protein RecA (348 aa).

66–73 contacts ATP; that stretch reads GPESSGKT.

It belongs to the RecA family.

Its subcellular location is the cytoplasm. Functionally, can catalyze the hydrolysis of ATP in the presence of single-stranded DNA, the ATP-dependent uptake of single-stranded DNA by duplex DNA, and the ATP-dependent hybridization of homologous single-stranded DNAs. It interacts with LexA causing its activation and leading to its autocatalytic cleavage. The protein is Protein RecA of Burkholderia lata (strain ATCC 17760 / DSM 23089 / LMG 22485 / NCIMB 9086 / R18194 / 383).